Here is a 144-residue protein sequence, read N- to C-terminus: MSMHYEDYMRQVVEPMRRELTERGFKELLTPEEVEQYMESAEGTTLVVINSVCGCAAGLARPAAVTSLAHDKHPDHLVTVFAGQEKEATAKMREYLAPNPPSSPSMALFKGKELVHFIPREEIEGAEPEALIRRLAMAYNEHCE.

It belongs to the bacilliredoxin family.

The polypeptide is Bacilliredoxin BH1716 (Halalkalibacterium halodurans (strain ATCC BAA-125 / DSM 18197 / FERM 7344 / JCM 9153 / C-125) (Bacillus halodurans)).